The primary structure comprises 661 residues: Heme transporter BhuA (661 aa).

The first 23 residues, Met-1–Ala-23, serve as a signal peptide directing secretion. One can recognise a TBDR plug domain in the interval Lys-48–Val-159. The TBDR beta-barrel domain occupies Thr-170 to Phe-661.

It belongs to the TonB-dependent receptor family.

Its subcellular location is the cell outer membrane. Its function is as follows. Heme transporter playing an important role in stationary-phase iron acquisition and required for maintenance of chronic infection in mice. The chain is Heme transporter BhuA (bhuA) from Brucella abortus (strain 2308).